Reading from the N-terminus, the 279-residue chain is Bifunctional protein FolD (279 aa).

NADP(+) contacts are provided by residues 158–160, Ser-183, and Ile-224; that span reads GRS.

The protein belongs to the tetrahydrofolate dehydrogenase/cyclohydrolase family. In terms of assembly, homodimer.

The catalysed reaction is (6R)-5,10-methylene-5,6,7,8-tetrahydrofolate + NADP(+) = (6R)-5,10-methenyltetrahydrofolate + NADPH. It carries out the reaction (6R)-5,10-methenyltetrahydrofolate + H2O = (6R)-10-formyltetrahydrofolate + H(+). The protein operates within one-carbon metabolism; tetrahydrofolate interconversion. Its function is as follows. Catalyzes the oxidation of 5,10-methylenetetrahydrofolate to 5,10-methenyltetrahydrofolate and then the hydrolysis of 5,10-methenyltetrahydrofolate to 10-formyltetrahydrofolate. This chain is Bifunctional protein FolD, found in Caldicellulosiruptor saccharolyticus (strain ATCC 43494 / DSM 8903 / Tp8T 6331).